The following is a 586-amino-acid chain: Assimilatory ferredoxin-dependent nitrite reductase (586 aa).

The [4Fe-4S] cluster site is built by C411, C417, C455, and C459. A siroheme-binding site is contributed by C459. A disordered region spans residues 566-586 (SWYPFADEDEPPKTEQPMTSD).

Belongs to the nitrite and sulfite reductase 4Fe-4S domain family. Monomer. It depends on siroheme as a cofactor. [4Fe-4S] cluster is required as a cofactor.

The enzyme catalyses 6 oxidized [2Fe-2S]-[ferredoxin] + NH4(+) + 2 H2O = nitrite + 6 reduced [2Fe-2S]-[ferredoxin] + 8 H(+). It participates in nitrogen metabolism; nitrate reduction (assimilation). Its activity is regulated as follows. Inhibited by cyanide and azide. Functionally, catalyzes the reduction of nitrite to ammonium in the nitrate assimilation pathway, using ferredoxin as the electron donor. Can use reduced methyl viologen but neither NADPH nor NADH as electron donors. In Haloferax mediterranei (strain ATCC 33500 / DSM 1411 / JCM 8866 / NBRC 14739 / NCIMB 2177 / R-4) (Halobacterium mediterranei), this protein is Assimilatory ferredoxin-dependent nitrite reductase.